The sequence spans 470 residues: tRNA modification GTPase MnmE (470 aa).

Residues Arg-24, Glu-81, and Lys-122 each coordinate (6S)-5-formyl-5,6,7,8-tetrahydrofolate. The TrmE-type G domain occupies 218–383 (GIKIVIAGKP…LQEYLSNNIK (166 aa)). Residue Asn-228 coordinates K(+). GTP-binding positions include 228–233 (NAGKSS), 247–253 (STISGTT), and 272–275 (DTAG). Residue Ser-232 coordinates Mg(2+). 3 residues coordinate K(+): Ser-247, Ile-249, and Thr-252. Thr-253 serves as a coordination point for Mg(2+). Lys-470 is a (6S)-5-formyl-5,6,7,8-tetrahydrofolate binding site.

This sequence belongs to the TRAFAC class TrmE-Era-EngA-EngB-Septin-like GTPase superfamily. TrmE GTPase family. Homodimer. Heterotetramer of two MnmE and two MnmG subunits. K(+) serves as cofactor.

Its subcellular location is the cytoplasm. Functionally, exhibits a very high intrinsic GTPase hydrolysis rate. Involved in the addition of a carboxymethylaminomethyl (cmnm) group at the wobble position (U34) of certain tRNAs, forming tRNA-cmnm(5)s(2)U34. The protein is tRNA modification GTPase MnmE of Blochmanniella pennsylvanica (strain BPEN).